The primary structure comprises 258 residues: Indole-3-glycerol phosphate synthase (258 aa).

The protein belongs to the TrpC family.

The enzyme catalyses 1-(2-carboxyphenylamino)-1-deoxy-D-ribulose 5-phosphate + H(+) = (1S,2R)-1-C-(indol-3-yl)glycerol 3-phosphate + CO2 + H2O. It participates in amino-acid biosynthesis; L-tryptophan biosynthesis; L-tryptophan from chorismate: step 4/5. The chain is Indole-3-glycerol phosphate synthase from Campylobacter fetus subsp. fetus (strain 82-40).